Consider the following 404-residue polypeptide: Phosphoglycerate kinase (404 aa).

Substrate is bound by residues 22-24 (DLN), Arg-37, 60-63 (HLGR), Arg-119, and Arg-156. Residues Lys-206, Gly-302, Glu-333, and 359 to 362 (GGDS) contribute to the ATP site.

Belongs to the phosphoglycerate kinase family. In terms of assembly, monomer.

It localises to the cytoplasm. The enzyme catalyses (2R)-3-phosphoglycerate + ATP = (2R)-3-phospho-glyceroyl phosphate + ADP. It participates in carbohydrate degradation; glycolysis; pyruvate from D-glyceraldehyde 3-phosphate: step 2/5. This Clavibacter michiganensis subsp. michiganensis (strain NCPPB 382) protein is Phosphoglycerate kinase.